The primary structure comprises 528 residues: 3-ketoacyl-CoA synthase 2 (528 aa).

2 consecutive transmembrane segments (helical) span residues 36-56 and 78-98; these read LGYHYLISNAVYILILPVGLL and FHFLSSTLFAALLIFLTTLYF. An FAE domain is found at 97–388; the sequence is YFTTRPRRIF…FFATLVARKV (292 aa). Residues Cys-241, His-320, His-407, His-411, and Asn-444 contribute to the active site.

This sequence belongs to the thiolase-like superfamily. Chalcone/stilbene synthases family. Expressed in siliques, flowers and stems. In young seedlings, expressed in the central cylinder of primary roots, in emerging lateral roots and in their root cap, but not in aboveground tissues such as hypocotyls, cotyledons and leaves. Expressed in sepals in mature flowers and in the chalaza and micropyle region of developing seeds shortly prior to or just after the detachment from the funiculus. Expressed in roots, flowers, cauline leaves and siliques.

The protein resides in the membrane. The enzyme catalyses a very-long-chain acyl-CoA + malonyl-CoA + H(+) = a very-long-chain 3-oxoacyl-CoA + CO2 + CoA. It participates in lipid metabolism; fatty acid biosynthesis. Its activity is regulated as follows. Inhibited by K3 herbicides such as allidochlor, anilofos, cafenstrole and flufenacet. Strongly inhibited by metazachlor. Mediates the synthesis of VLCFAs from 22 to 26 carbons in length (e.g. C22, C24, C26). Involved in the elongation of C20 fatty acid suberin precursors. Functionally redundant with KCS20 in the two-carbon elongation of C22 fatty acids that is required for cuticular wax and root suberin biosynthesis. The chain is 3-ketoacyl-CoA synthase 2 from Arabidopsis thaliana (Mouse-ear cress).